A 254-amino-acid chain; its full sequence is Nickel import ATP-binding protein NikD (254 aa).

One can recognise an ABC transporter domain in the interval 2–241 (PQQIELRNIA…PKHTVTRSLV (240 aa)). ATP is bound at residue 36–43 (GGSGSGKS).

It belongs to the ABC transporter superfamily. Nickel importer (TC 3.A.1.5.3) family. The complex is composed of two ATP-binding proteins (NikD and NikE), two transmembrane proteins (NikB and NikC) and a solute-binding protein (NikA).

The protein localises to the cell inner membrane. It catalyses the reaction Ni(2+)(out) + ATP + H2O = Ni(2+)(in) + ADP + phosphate + H(+). In terms of biological role, part of the ABC transporter complex NikABCDE involved in nickel import. Responsible for energy coupling to the transport system. This is Nickel import ATP-binding protein NikD from Shigella boydii serotype 4 (strain Sb227).